The following is a 438-amino-acid chain: Glucose-6-phosphate isomerase (438 aa).

The Proton donor role is filled by Glu289. Catalysis depends on residues His310 and Lys424.

This sequence belongs to the GPI family.

It localises to the cytoplasm. It carries out the reaction alpha-D-glucose 6-phosphate = beta-D-fructose 6-phosphate. It participates in carbohydrate biosynthesis; gluconeogenesis. It functions in the pathway carbohydrate degradation; glycolysis; D-glyceraldehyde 3-phosphate and glycerone phosphate from D-glucose: step 2/4. Its function is as follows. Catalyzes the reversible isomerization of glucose-6-phosphate to fructose-6-phosphate. This chain is Glucose-6-phosphate isomerase, found in Oenococcus oeni (strain ATCC BAA-331 / PSU-1).